Here is a 97-residue protein sequence, read N- to C-terminus: uncharacterized protein (97 aa).

The residue at position 2 (Ser2) is an N-acetylserine.

This is an uncharacterized protein from Mycobacterium tuberculosis (strain ATCC 25618 / H37Rv).